The sequence spans 122 residues: ETPAEKFQRQHMDTEHSTASSSNYCNLMMKARDMTSGRCKPLNTFIHEPKSVVDAVCHQENVTCKNGRTNCYKSNSRLSITNCRQTGASKYPNCQYETSNLNKQIIVACEGQYVPVHFDAYV.

The segment covering 1-16 (ETPAEKFQRQHMDTEH) has biased composition (basic and acidic residues). The tract at residues 1-20 (ETPAEKFQRQHMDTEHSTAS) is disordered. Substrate-binding residues include lysine 6 and arginine 9. Residue histidine 11 is the Proton acceptor of the active site. Intrachain disulfides connect cysteine 25–cysteine 83, cysteine 39–cysteine 94, cysteine 57–cysteine 109, and cysteine 64–cysteine 71. Residues 40-44 (KPLNT), lysine 65, and arginine 84 each bind substrate. Catalysis depends on histidine 117, which acts as the Proton donor.

The protein belongs to the pancreatic ribonuclease family. As to quaternary structure, monomer. Interacts with and forms tight 1:1 complexes with RNH1. Dimerization of two such complexes may occur. Interaction with RNH1 inhibits this protein. Post-translationally, not glycosylated although the sequence N-V-T, a recognition site for carbohydrate attachment, is present. In terms of tissue distribution, pancreas.

It is found in the secreted. It carries out the reaction an [RNA] containing cytidine + H2O = an [RNA]-3'-cytidine-3'-phosphate + a 5'-hydroxy-ribonucleotide-3'-[RNA].. It catalyses the reaction an [RNA] containing uridine + H2O = an [RNA]-3'-uridine-3'-phosphate + a 5'-hydroxy-ribonucleotide-3'-[RNA].. Its function is as follows. Endonuclease that catalyzes the cleavage of RNA on the 3' side of pyrimidine nucleotides. Acts on single-stranded and double-stranded RNA. This is Ribonuclease pancreatic (RNASE1) from Osphranter rufus (Red kangaroo).